We begin with the raw amino-acid sequence, 484 residues long: Chromosomal replication initiator protein DnaA (484 aa).

The domain I, interacts with DnaA modulators stretch occupies residues 1–83; sequence MQPPSQDWAS…LAWRTVWPGI (83 aa). The segment at 83–146 is domain II; it reads IAEVKVSVRN…EKKAEGEDQN (64 aa). The segment at 110–146 is disordered; it reads GDQPRPLPKKPAKKKQSVPATPKSTSPEKKAEGEDQN. Basic residues predominate over residues 116–125; sequence LPKKPAKKKQ. Residues 135–146 are compositionally biased toward basic and acidic residues; the sequence is SPEKKAEGEDQN. The domain III, AAA+ region stretch occupies residues 147–364; that stretch reads QFEERYNFDN…GALNRVVAYA (218 aa). ATP contacts are provided by glycine 191, glycine 193, lysine 194, and threonine 195. Residues 365–484 form a domain IV, binds dsDNA region; the sequence is TLSNRPINMD…VRLLMRQFEG (120 aa).

This sequence belongs to the DnaA family. Oligomerizes as a right-handed, spiral filament on DNA at oriC.

Its subcellular location is the cytoplasm. In terms of biological role, plays an essential role in the initiation and regulation of chromosomal replication. ATP-DnaA binds to the origin of replication (oriC) to initiate formation of the DNA replication initiation complex once per cell cycle. Binds the DnaA box (a 9 base pair repeat at the origin) and separates the double-stranded (ds)DNA. Forms a right-handed helical filament on oriC DNA; dsDNA binds to the exterior of the filament while single-stranded (ss)DNA is stabiized in the filament's interior. The ATP-DnaA-oriC complex binds and stabilizes one strand of the AT-rich DNA unwinding element (DUE), permitting loading of DNA polymerase. After initiation quickly degrades to an ADP-DnaA complex that is not apt for DNA replication. Binds acidic phospholipids. The protein is Chromosomal replication initiator protein DnaA of Zymomonas mobilis subsp. mobilis (strain ATCC 31821 / ZM4 / CP4).